Consider the following 298-residue polypeptide: MAFARFARPTQRFLPFAIGAVAVTAGALYLNGWNTIKNENPKVFIGDRKWIDLELEKIIEESHDTKRFFFKLPTDDSVSGLTLASAVLTKFMTPKGNPVIRPYTPVSDLSEKGYIEFVIKHYEGGKMTDHLFQLKPKDTLAFQGPIPKWQWKPNSFDTITLLGGGTGITPLYQLVHHITQNKEDKTKINLFYGSKTPSDILLKKELDDLQKKYPEQLNIQYFVDKDDTGKFDGNKGFITKDFLAKNAPGPKEKTQVFVCGPPPFMDSLSGQKKSPMEQGDLTGALKDLGYSQDQVFKF.

Residues 13–33 (FLPFAIGAVAVTAGALYLNGW) traverse the membrane as a helical segment. The FAD-binding FR-type domain maps to 48-152 (RKWIDLELEK…QGPIPKWQWK (105 aa)). 155–190 (SFDTITLLGGGTGITPLYQLVHHITQNKEDKTKINL) is an FAD binding site.

This sequence belongs to the flavoprotein pyridine nucleotide cytochrome reductase family. Requires FAD as cofactor.

The protein resides in the mitochondrion outer membrane. The enzyme catalyses 2 Fe(III)-[cytochrome b5] + NADH = 2 Fe(II)-[cytochrome b5] + NAD(+) + H(+). Its function is as follows. May mediate the reduction of outer membrane cytochrome b5. The sequence is that of NADH-cytochrome b5 reductase 2 (MCR1) from Candida glabrata (strain ATCC 2001 / BCRC 20586 / JCM 3761 / NBRC 0622 / NRRL Y-65 / CBS 138) (Yeast).